The sequence spans 310 residues: MLFDKYGRSLQKLRYVVNDECNYNCVFCHFEGQSRRQGRYLTAEDYGFVTSVFKSLGVADFKITGGEPLLRGDIDLIVANIAKTGAYVTLTTNGYLLRKWVRKLQAAGLKRANVSIHTTDPEKYSKITGVPPSAFREVLRGLTEARDVGISLKLNAVVLRGINTDRDSVKNLVKLAASLGAALQFIELMPSGWGASVFNELYEPIETLVNIIFELGGRPAGVRKELHNRPLYNIAGVTVELIKNFSNPTFCSGCTTMRLTSDGKLKTCIYADSSVDLMPYIKSRDVEGLLYAVRTALARREPRFKLYSSS.

One can recognise a Radical SAM core domain in the interval 5-218; that stretch reads KYGRSLQKLR…VNIIFELGGR (214 aa). Residue arginine 14 coordinates GTP. Cysteine 21, cysteine 25, and cysteine 28 together coordinate [4Fe-4S] cluster. Residue lysine 62 participates in GTP binding. Residue glycine 66 participates in S-adenosyl-L-methionine binding. Threonine 91 provides a ligand contact to GTP. Serine 115 contacts S-adenosyl-L-methionine. Lysine 153 serves as a coordination point for GTP. 3 residues coordinate [4Fe-4S] cluster: cysteine 251, cysteine 254, and cysteine 268.

The protein belongs to the radical SAM superfamily. MoaA family. [4Fe-4S] cluster is required as a cofactor.

It carries out the reaction GTP + AH2 + S-adenosyl-L-methionine = (8S)-3',8-cyclo-7,8-dihydroguanosine 5'-triphosphate + 5'-deoxyadenosine + L-methionine + A + H(+). It functions in the pathway cofactor biosynthesis; molybdopterin biosynthesis. Functionally, catalyzes the cyclization of GTP to (8S)-3',8-cyclo-7,8-dihydroguanosine 5'-triphosphate. The protein is Probable GTP 3',8-cyclase of Pyrobaculum aerophilum (strain ATCC 51768 / DSM 7523 / JCM 9630 / CIP 104966 / NBRC 100827 / IM2).